A 266-amino-acid polypeptide reads, in one-letter code: UPF0354 protein Lm4b_01619 (266 aa).

It belongs to the UPF0354 family.

In Listeria monocytogenes serotype 4b (strain CLIP80459), this protein is UPF0354 protein Lm4b_01619.